The chain runs to 639 residues: uncharacterized protein (639 aa).

This is an uncharacterized protein from Mus musculus (Mouse).